The primary structure comprises 241 residues: uncharacterized protein (241 aa).

This is an uncharacterized protein from Methanocaldococcus jannaschii (strain ATCC 43067 / DSM 2661 / JAL-1 / JCM 10045 / NBRC 100440) (Methanococcus jannaschii).